We begin with the raw amino-acid sequence, 181 residues long: Adenine phosphoribosyltransferase (181 aa).

The protein belongs to the purine/pyrimidine phosphoribosyltransferase family. In terms of assembly, homodimer.

Its subcellular location is the cytoplasm. The catalysed reaction is AMP + diphosphate = 5-phospho-alpha-D-ribose 1-diphosphate + adenine. The protein operates within purine metabolism; AMP biosynthesis via salvage pathway; AMP from adenine: step 1/1. Catalyzes a salvage reaction resulting in the formation of AMP, that is energically less costly than de novo synthesis. This chain is Adenine phosphoribosyltransferase, found in Aeromonas salmonicida (strain A449).